Here is a 276-residue protein sequence, read N- to C-terminus: NAD(+)--protein-threonine ADP-ribosyltransferase (276 aa).

In terms of assembly, interacts directly with host ubiquitin.

It is found in the secreted. Its subcellular location is the host cell. It carries out the reaction L-threonyl-[protein] + NAD(+) = O-(ADP-D-ribosyl)-L-threonyl-[protein] + nicotinamide + H(+). ADP-ribosyltransferase that specifically modifies host ubiquitin on 'Thr-66' residue, which causes the shutdown of polyubiquitin synthesis and disrupts the recognition and reversal of polyubiquitin in host cells during infection. Threonine ADP-ribosylation of ubiquitin prevents the transfer of ubiquitin from ubiquitin-activating enzyme E1 to ubiquitin-conjugating enzyme E2, which inhibits subsequent ubiquitin activation and leads to the shutdown of polyubiquitin synthesis in host cells. The modification also causes dysfunction of polyubiquitin chains in cells, thereby blocking host ubiquitin signaling. ADP-ribosylation by CteC is likely irreversible. Plays a crucial role in bacterial colonization in mice during infection. The chain is NAD(+)--protein-threonine ADP-ribosyltransferase from Chromobacterium violaceum (strain ATCC 12472 / DSM 30191 / JCM 1249 / CCUG 213 / NBRC 12614 / NCIMB 9131 / NCTC 9757 / MK).